Consider the following 372-residue polypeptide: Mannan endo-1,4-beta-mannosidase 8 (372 aa).

Substrate contacts are provided by tryptophan 57 and asparagine 172. The active-site Proton donor is the glutamate 173. Residue tyrosine 253 participates in substrate binding. Glutamate 293 serves as the catalytic Nucleophile. Substrate is bound at residue tryptophan 335.

It belongs to the glycosyl hydrolase 5 (cellulase A) family. In terms of tissue distribution, expressed in stems and leaves and seeds.

The catalysed reaction is Random hydrolysis of (1-&gt;4)-beta-D-mannosidic linkages in mannans, galactomannans and glucomannans.. The chain is Mannan endo-1,4-beta-mannosidase 8 (MAN8) from Oryza sativa subsp. japonica (Rice).